The following is a 250-amino-acid chain: Probable transcriptional regulatory protein MAP_1030 (250 aa).

The protein belongs to the TACO1 family.

It localises to the cytoplasm. The chain is Probable transcriptional regulatory protein MAP_1030 from Mycolicibacterium paratuberculosis (strain ATCC BAA-968 / K-10) (Mycobacterium paratuberculosis).